Here is a 241-residue protein sequence, read N- to C-terminus: uncharacterized protein (241 aa).

The HTH cro/C1-type domain occupies Leu-32 to Glu-86. Positions Gln-43–Val-62 form a DNA-binding region, H-T-H motif.

This is an uncharacterized protein from Methanocaldococcus jannaschii (strain ATCC 43067 / DSM 2661 / JAL-1 / JCM 10045 / NBRC 100440) (Methanococcus jannaschii).